A 1300-amino-acid chain; its full sequence is CRISPR-associated endonuclease Cas12a (1300 aa).

The wedge region 1 stretch occupies residues 1–24; the sequence is MSIYQEFVNKYSLSKTLRFELIPQ. Recognition domain stretches follow at residues 25-339 and 340-591; these read GKTL…SFVI and DKLE…QKPY. Binds crRNA alone and in crRNA-target DNA heteroduplex regions lie at residues 47–51 and 182–186; these read YKKAK and FHENR. The binds DNA in crRNA-target DNA heteroduplex stretch occupies residues 301 to 305; it reads NEYIN. Binds crRNA in crRNA-target DNA heteroduplex stretches follow at residues 326–329 and 538–541; these read KQIL and HKLK. Residues 591–595 form a binds crRNA region; sequence YSDEK. The tract at residues 592–662 is wedge region 2; sequence SDEKFKLNFE…GYKKIVYKLL (71 aa). Residues 662–679 are LKL, important for PAM recognition and DNA unwinding; the sequence is LPGANKMLPKVFFSAKSI. A PAM-interacting domain (PI) region spans residues 663 to 762; that stretch reads PGANKMLPKV…FYREVENQGY (100 aa). Residues 671 to 677 are binds DNA protospacer adjacent motif (PAM) on target DNA; sequence KVFFSAK. The binds single-strand non-target DNA stretch occupies residues 692-704; the sequence is RNHSTHTKNGSPQ. The interval 763-892 is wedge region 3; it reads KLTFENISES…PITINFKSSG (130 aa). 2 binds crRNA regions span residues 791 to 794 and 803 to 804; these read KDFS and LH. Catalysis depends on for pre-crRNA processing residues His843, Lys852, and Lys869. Binds crRNA regions lie at residues 851–853 and 865–873; these read NKN and YDLIKDKRF. Residues 893-953 form a ruvC-I region; that stretch reads ANKFNDEINL…IGNDRMKTNY (61 aa). The active-site For DNase activity of RuvC domain is Asp917. Positions 954–971 are bridge helix; it reads HDKLAAIEKDRDSARKDW. The segment at 972–1078 is ruvC-II; sequence KKINNIKEMK…KQTGIIYYVP (107 aa). Glu1006 serves as the catalytic For DNase activity of RuvC domain. The interval 1079–1254 is nuclease domain; the sequence is AGFTSKICPV…QAPKNMPQDA (176 aa). Catalysis depends on Asp1255, which acts as the For DNase activity of RuvC domain. The ruvC-III stretch occupies residues 1255 to 1300; the sequence is DANGAYHIGLKGLMLLGRIKNNQEGKKLNLVIKNEEYFEFVQNRNN.

This sequence belongs to the CRISPR-associated endonuclease Cas12a family. As to quaternary structure, might be a homodimer. Might be a monomer. The cofactor is Ca(2+). Requires Mg(2+) as cofactor.

The enzyme catalyses Endonucleolytic cleavage to 5'-phosphodinucleotide and 5'-phosphooligonucleotide end-products.. It catalyses the reaction RNA = a 5'-hydroxy-ribonucleotide + n nucleoside-2',3'-cyclophosphates.. Functionally, CRISPR (clustered regularly interspaced short palindromic repeat), is an adaptive immune system that provides protection against mobile genetic elements (viruses, transposable elements and conjugative plasmids). CRISPR clusters contain sequences complementary to antecedent mobile elements and target invading nucleic acids. CRISPR clusters are transcribed and processed into CRISPR RNA (crRNA). Has endonuclease activity on pre-crRNA and dsDNA, using different active sites. A single-RNA guided endonuclease that is also capable of guiding crRNA processing; correct processing of pre-crRNA requires only this protein and the CRISPR locus. pre-crRNA processing proceeds by an intramolecular nucleophilic attack on the scissile phosphate by the 2'-OH of the upstream ribonucleotide, the divalent cation (which is bound by the crRNA) is probably required for ordering the crRNA pseudoknot and/or increasing RNA binding. RNA mutagenesis studies show pre-crRNA cleavage is highly sequence- and structure-specific. Forms a complex with crRNA and complementary dsDNA, where the crRNA displaces the non-target DNA strand and directs endonucleolytic cleavage of both strands of the DNA. Cleavage results in staggered 5-base 5' overhangs 14-18 and 21-23 bases downstream of the PAM (protospacer adjacent motif) on the non-target and target strands respectively. Both target and non-target strand DNA are probably independently cleaved in the same active site. When this protein is expressed in E.coli it prevents plasmids homologous to the first CRISPR spacer from transforming, formally showing it is responsible for plasmid immunity. In Francisella tularensis subsp. novicida (strain U112), this protein is CRISPR-associated endonuclease Cas12a.